Consider the following 190-residue polypeptide: uncharacterized protein (190 aa).

A run of 4 helical transmembrane segments spans residues 15–35 (LVMS…VLAI), 58–78 (FSSF…GVLI), 94–114 (FFSA…YFAF), and 148–168 (FLFF…SFFV).

Its subcellular location is the membrane. This is an uncharacterized protein from Saccharomyces cerevisiae (strain ATCC 204508 / S288c) (Baker's yeast).